The chain runs to 159 residues: Phosphopantetheine adenylyltransferase (159 aa).

Serine 8 contacts substrate. Residues 8–9 and histidine 16 each bind ATP; that span reads SF. Substrate is bound by residues lysine 40, valine 72, and arginine 86. ATP is bound by residues 87–89, glutamate 97, and 122–128; these read GVR and YAALRSS.

This sequence belongs to the bacterial CoaD family. As to quaternary structure, homohexamer. Mg(2+) serves as cofactor.

The protein localises to the cytoplasm. It carries out the reaction (R)-4'-phosphopantetheine + ATP + H(+) = 3'-dephospho-CoA + diphosphate. It participates in cofactor biosynthesis; coenzyme A biosynthesis; CoA from (R)-pantothenate: step 4/5. Reversibly transfers an adenylyl group from ATP to 4'-phosphopantetheine, yielding dephospho-CoA (dPCoA) and pyrophosphate. The sequence is that of Phosphopantetheine adenylyltransferase from Treponema pallidum (strain Nichols).